The chain runs to 322 residues: Lipoyl synthase (322 aa).

Positions Met1–Gly12 are enriched in polar residues. The interval Met1 to Arg22 is disordered. [4Fe-4S] cluster is bound by residues Cys60, Cys65, Cys71, Cys86, Cys90, Cys93, and Ser299. Residues Trp72 to Leu288 form the Radical SAM core domain.

This sequence belongs to the radical SAM superfamily. Lipoyl synthase family. [4Fe-4S] cluster serves as cofactor.

The protein localises to the cytoplasm. The catalysed reaction is [[Fe-S] cluster scaffold protein carrying a second [4Fe-4S](2+) cluster] + N(6)-octanoyl-L-lysyl-[protein] + 2 oxidized [2Fe-2S]-[ferredoxin] + 2 S-adenosyl-L-methionine + 4 H(+) = [[Fe-S] cluster scaffold protein] + N(6)-[(R)-dihydrolipoyl]-L-lysyl-[protein] + 4 Fe(3+) + 2 hydrogen sulfide + 2 5'-deoxyadenosine + 2 L-methionine + 2 reduced [2Fe-2S]-[ferredoxin]. The protein operates within protein modification; protein lipoylation via endogenous pathway; protein N(6)-(lipoyl)lysine from octanoyl-[acyl-carrier-protein]: step 2/2. Catalyzes the radical-mediated insertion of two sulfur atoms into the C-6 and C-8 positions of the octanoyl moiety bound to the lipoyl domains of lipoate-dependent enzymes, thereby converting the octanoylated domains into lipoylated derivatives. This Brucella abortus (strain S19) protein is Lipoyl synthase.